The chain runs to 453 residues: Anthocyanidin 3-O-glucosyltransferase (453 aa).

The active-site Proton acceptor is His-17. Position 17 (His-17) interacts with an anthocyanidin. The active-site Charge relay is the Asp-117. Thr-139 is a UDP-alpha-D-glucose binding site. Residue His-148 coordinates an anthocyanidin. Positions 331, 333, 348, 351, 352, 353, and 356 each coordinate UDP-alpha-D-glucose. Position 371 (Gly-371) interacts with an anthocyanidin. The UDP-alpha-D-glucose site is built by Asp-372 and Gln-373.

This sequence belongs to the UDP-glycosyltransferase family.

The enzyme catalyses an anthocyanidin + UDP-alpha-D-glucose + H(+) = an anthocyanidin 3-O-beta-D-glucoside + UDP. The catalysed reaction is delphinidin + UDP-alpha-D-glucose = delphinidin 3-O-beta-D-glucoside + UDP. It carries out the reaction pelargonidin + UDP-alpha-D-glucose = pelargonidin 3-O-beta-D-glucoside + UDP. It catalyses the reaction cyanidin + UDP-alpha-D-glucose = cyanidin 3-O-beta-D-glucoside + UDP + H(+). It functions in the pathway pigment biosynthesis; anthocyanin biosynthesis. In the presence of other necessary color factors, this glycosylation reaction allows the accumulation of anthocyanin pigments. Anthocyanidins are the preferred substrates, while flavonols are only a minor substrate in vitro. The polypeptide is Anthocyanidin 3-O-glucosyltransferase (Gentiana triflora (Clustered gentian)).